A 66-amino-acid chain; its full sequence is Type 3 secretion system chaperone YscE (66 aa).

The protein belongs to the YscE family. Component of the heterodimeric YscE-YscG chaperone. The YscE-YscG chaperone forms a stable ternary complex with YscF/SctF. YscE interacts with YscG, but makes very little direct contact with YscF. Homodimer in solution.

It localises to the cytoplasm. Chaperone of the type III secretion system (T3SS), also called injectisome, which is used to inject bacterial effector proteins into eukaryotic host cells. Along with YscG, prevents premature polymerization of the YscF/SctF needle protein within the cytoplasm. Is also required for stable expression of cytosolic YscF and for YscF secretion. Likely plays a role in targeting YscF present in the cytosolic YscEFG complex to the T3SS apparatus. Required for Yop secretion. The protein is Type 3 secretion system chaperone YscE of Yersinia pestis.